A 140-amino-acid chain; its full sequence is Profilin-1 (140 aa).

The residue at position 2 (A2) is an N-acetylalanine. Residue S28 is modified to Phosphoserine. K54 participates in a covalent cross-link: Glycyl lysine isopeptide (Lys-Gly) (interchain with G-Cter in SUMO2); alternate. A Glycyl lysine isopeptide (Lys-Gly) (interchain with G-Cter in ubiquitin); alternate cross-link involves residue K54. Phosphoserine is present on S57. K108 carries the post-translational modification N6-acetyllysine. The residue at position 129 (Y129) is a Phosphotyrosine. S138 carries the post-translational modification Phosphoserine; by ROCK1.

It belongs to the profilin family. As to quaternary structure, found in a complex with XPO6, Ran, ACTB and PFN1. Interacts with ACTB. Interacts with VASP. Interacts with HTT. Interacts with SH3BGRL. Occurs in many kinds of cells as a complex with monomeric actin in a 1:1 ratio. Interacts with ACTMAP. Post-translationally, phosphorylation at Ser-138 reduces its affinity for G-actin and blocks its interaction with HTT, reducing its ability to inhibit androgen receptor (AR) and HTT aggregation.

It is found in the cytoplasm. The protein resides in the cytoskeleton. In terms of biological role, binds to actin and affects the structure of the cytoskeleton. At high concentrations, profilin prevents the polymerization of actin, whereas it enhances it at low concentrations. By binding to PIP2, it inhibits the formation of IP3 and DG. Inhibits androgen receptor (AR) and HTT aggregation and binding of G-actin is essential for its inhibition of AR. This is Profilin-1 (PFN1) from Bos taurus (Bovine).